The primary structure comprises 62 residues: Photosystem II reaction center protein Z (62 aa).

2 consecutive transmembrane segments (helical) span residues 8 to 28 and 41 to 61; these read AVFASIAIPFILVIGVPVVLA and FSGASSWIGLVFLVGILNSLI.

Belongs to the PsbZ family. PSII is composed of 1 copy each of membrane proteins PsbA, PsbB, PsbC, PsbD, PsbE, PsbF, PsbH, PsbI, PsbJ, PsbK, PsbL, PsbM, PsbT, PsbY, PsbZ, Psb30/Ycf12, at least 3 peripheral proteins of the oxygen-evolving complex and a large number of cofactors. It forms dimeric complexes.

Its subcellular location is the plastid. The protein localises to the chloroplast thylakoid membrane. In terms of biological role, may control the interaction of photosystem II (PSII) cores with the light-harvesting antenna, regulates electron flow through the 2 photosystem reaction centers. PSII is a light-driven water plastoquinone oxidoreductase, using light energy to abstract electrons from H(2)O, generating a proton gradient subsequently used for ATP formation. The sequence is that of Photosystem II reaction center protein Z from Huperzia lucidula (Shining clubmoss).